The primary structure comprises 261 residues: Shikimate dehydrogenase (NADP(+)) (261 aa).

Shikimate is bound by residues 13 to 15 and Thr-60; that span reads SLS. The active-site Proton acceptor is Lys-64. Residues Asn-85 and Asp-100 each coordinate shikimate. Residues 121 to 125 and Ile-202 each bind NADP(+); that span reads GAGGA. Residue Tyr-204 participates in shikimate binding. Gly-225 contacts NADP(+).

Belongs to the shikimate dehydrogenase family. As to quaternary structure, homodimer.

It carries out the reaction shikimate + NADP(+) = 3-dehydroshikimate + NADPH + H(+). It functions in the pathway metabolic intermediate biosynthesis; chorismate biosynthesis; chorismate from D-erythrose 4-phosphate and phosphoenolpyruvate: step 4/7. In terms of biological role, involved in the biosynthesis of the chorismate, which leads to the biosynthesis of aromatic amino acids. Catalyzes the reversible NADPH linked reduction of 3-dehydroshikimate (DHSA) to yield shikimate (SA). This Exiguobacterium sibiricum (strain DSM 17290 / CCUG 55495 / CIP 109462 / JCM 13490 / 255-15) protein is Shikimate dehydrogenase (NADP(+)).